We begin with the raw amino-acid sequence, 238 residues long: Ribonuclease PH (238 aa).

Phosphate contacts are provided by residues Arg86 and 124–126 (GTR).

Belongs to the RNase PH family. As to quaternary structure, homohexameric ring arranged as a trimer of dimers.

It carries out the reaction tRNA(n+1) + phosphate = tRNA(n) + a ribonucleoside 5'-diphosphate. Functionally, phosphorolytic 3'-5' exoribonuclease that plays an important role in tRNA 3'-end maturation. Removes nucleotide residues following the 3'-CCA terminus of tRNAs; can also add nucleotides to the ends of RNA molecules by using nucleoside diphosphates as substrates, but this may not be physiologically important. Probably plays a role in initiation of 16S rRNA degradation (leading to ribosome degradation) during starvation. In Acinetobacter baumannii (strain AB307-0294), this protein is Ribonuclease PH.